A 347-amino-acid chain; its full sequence is Ribosomal RNA small subunit methyltransferase H (347 aa).

S-adenosyl-L-methionine is bound by residues 50 to 52 (GGH), Asp-69, Phe-96, Asp-125, and Gln-132.

Belongs to the methyltransferase superfamily. RsmH family.

The protein resides in the cytoplasm. The enzyme catalyses cytidine(1402) in 16S rRNA + S-adenosyl-L-methionine = N(4)-methylcytidine(1402) in 16S rRNA + S-adenosyl-L-homocysteine + H(+). In terms of biological role, specifically methylates the N4 position of cytidine in position 1402 (C1402) of 16S rRNA. This Corynebacterium aurimucosum (strain ATCC 700975 / DSM 44827 / CIP 107346 / CN-1) (Corynebacterium nigricans) protein is Ribosomal RNA small subunit methyltransferase H.